We begin with the raw amino-acid sequence, 667 residues long: DNA ligase (667 aa).

NAD(+)-binding positions include 32 to 36 (DSEYD), 81 to 82 (SL), and glutamate 110. Residue lysine 112 is the N6-AMP-lysine intermediate of the active site. NAD(+) contacts are provided by arginine 133, glutamate 167, lysine 283, and lysine 307. Zn(2+)-binding residues include cysteine 401, cysteine 404, cysteine 419, and cysteine 424. Residues 586-667 (EGHPEFSGKT…FVDKQNELNS (82 aa)) enclose the BRCT domain.

It belongs to the NAD-dependent DNA ligase family. LigA subfamily. The cofactor is Mg(2+). Mn(2+) serves as cofactor.

The enzyme catalyses NAD(+) + (deoxyribonucleotide)n-3'-hydroxyl + 5'-phospho-(deoxyribonucleotide)m = (deoxyribonucleotide)n+m + AMP + beta-nicotinamide D-nucleotide.. In terms of biological role, DNA ligase that catalyzes the formation of phosphodiester linkages between 5'-phosphoryl and 3'-hydroxyl groups in double-stranded DNA using NAD as a coenzyme and as the energy source for the reaction. It is essential for DNA replication and repair of damaged DNA. The chain is DNA ligase from Staphylococcus aureus (strain COL).